The chain runs to 305 residues: DNA-directed RNA polymerase 35 kDa subunit (305 aa).

The protein belongs to the poxviridae DNA-directed RNA polymerase 35 kDa subunit family. As to quaternary structure, the DNA-dependent RNA polymerase used for intermediate and late genes expression consists of eight subunits 147 kDa, 133 kDa, 35 kDa, 30 kDa, 22 kDa, 19 kDa, 18 kDa and 7 kDa totalling more than 500 kDa in mass. The same holoenzyme, with the addition of the transcription-specificity factor RAP94, is used for early gene expression.

It is found in the virion. The enzyme catalyses RNA(n) + a ribonucleoside 5'-triphosphate = RNA(n+1) + diphosphate. Its function is as follows. Part of the DNA-dependent RNA polymerase which catalyzes the transcription of viral DNA into RNA using the four ribonucleoside triphosphates as substrates. Responsible for the transcription of early, intermediate and late genes. DNA-dependent RNA polymerase associates with the early transcription factor (ETF), itself composed of D6 and A7, thereby allowing the early genes transcription. Late transcription, and probably also intermediate transcription, require newly synthesized RNA polymerase. The chain is DNA-directed RNA polymerase 35 kDa subunit (OPG156) from Homo sapiens (Human).